A 333-amino-acid polypeptide reads, in one-letter code: Lipoyl synthase (333 aa).

Residues 1–29 (MTDSAAGATEVATPATPSNKPYDATAKQK) are disordered. The [4Fe-4S] cluster site is built by C80, C85, C91, C106, C110, C113, and S320. Residues 91 to 309 (CFGKGTATFM…EEKAYEMGFT (219 aa)) form the Radical SAM core domain.

Belongs to the radical SAM superfamily. Lipoyl synthase family. [4Fe-4S] cluster is required as a cofactor.

The protein resides in the cytoplasm. It carries out the reaction [[Fe-S] cluster scaffold protein carrying a second [4Fe-4S](2+) cluster] + N(6)-octanoyl-L-lysyl-[protein] + 2 oxidized [2Fe-2S]-[ferredoxin] + 2 S-adenosyl-L-methionine + 4 H(+) = [[Fe-S] cluster scaffold protein] + N(6)-[(R)-dihydrolipoyl]-L-lysyl-[protein] + 4 Fe(3+) + 2 hydrogen sulfide + 2 5'-deoxyadenosine + 2 L-methionine + 2 reduced [2Fe-2S]-[ferredoxin]. The protein operates within protein modification; protein lipoylation via endogenous pathway; protein N(6)-(lipoyl)lysine from octanoyl-[acyl-carrier-protein]: step 2/2. Its function is as follows. Catalyzes the radical-mediated insertion of two sulfur atoms into the C-6 and C-8 positions of the octanoyl moiety bound to the lipoyl domains of lipoate-dependent enzymes, thereby converting the octanoylated domains into lipoylated derivatives. The protein is Lipoyl synthase of Ralstonia pickettii (strain 12J).